Consider the following 372-residue polypeptide: Queuine tRNA-ribosyltransferase (372 aa).

Asp92 serves as the catalytic Proton acceptor. Substrate contacts are provided by residues 92–96, Asp146, Gln188, and Gly215; that span reads DSGGF. The interval 246–252 is RNA binding; that stretch reads GIGTLRE. Asp265 functions as the Nucleophile in the catalytic mechanism. Residues 270–274 form an RNA binding; important for wobble base 34 recognition region; that stretch reads TRLGR. Zn(2+) contacts are provided by Cys303, Cys305, Cys308, and His334.

It belongs to the queuine tRNA-ribosyltransferase family. Homodimer. Within each dimer, one monomer is responsible for RNA recognition and catalysis, while the other monomer binds to the replacement base PreQ1. Requires Zn(2+) as cofactor.

It catalyses the reaction 7-aminomethyl-7-carbaguanine + guanosine(34) in tRNA = 7-aminomethyl-7-carbaguanosine(34) in tRNA + guanine. It functions in the pathway tRNA modification; tRNA-queuosine biosynthesis. Its function is as follows. Catalyzes the base-exchange of a guanine (G) residue with the queuine precursor 7-aminomethyl-7-deazaguanine (PreQ1) at position 34 (anticodon wobble position) in tRNAs with GU(N) anticodons (tRNA-Asp, -Asn, -His and -Tyr). Catalysis occurs through a double-displacement mechanism. The nucleophile active site attacks the C1' of nucleotide 34 to detach the guanine base from the RNA, forming a covalent enzyme-RNA intermediate. The proton acceptor active site deprotonates the incoming PreQ1, allowing a nucleophilic attack on the C1' of the ribose to form the product. After dissociation, two additional enzymatic reactions on the tRNA convert PreQ1 to queuine (Q), resulting in the hypermodified nucleoside queuosine (7-(((4,5-cis-dihydroxy-2-cyclopenten-1-yl)amino)methyl)-7-deazaguanosine). The polypeptide is Queuine tRNA-ribosyltransferase (Prochlorococcus marinus (strain MIT 9303)).